The chain runs to 380 residues: uncharacterized protein (380 aa).

This is an uncharacterized protein from Sinorhizobium fredii (strain NBRC 101917 / NGR234).